The following is a 648-amino-acid chain: Putative potassium transport protein DDB_G0292412 (648 aa).

The chain crosses the membrane as a helical span at residues 48-68; sequence LFLLVILVQLGSTVLLTLPIV. The N-linked (GlcNAc...) asparagine glycan is linked to asparagine 81. Disordered stretches follow at residues 106–145 and 223–261; these read HDFK…DDND and QQQQ…DSQS. A compositionally biased stretch (acidic residues) spans 110-129; it reads DDDDENDNNNNEENDDNDDE. Positions 199-227 form a coiled coil; sequence IIQQQQQQQQQQQQQQQQQQQQQQQQQQQ. N-linked (GlcNAc...) asparagine glycosylation is found at asparagine 239, asparagine 243, asparagine 247, asparagine 248, asparagine 254, and asparagine 257. 6 consecutive transmembrane segments (helical) span residues 313–333, 353–373, 385–405, 443–463, 472–491, and 505–525; these read LLVI…ISIG, GWWW…LALF, FLLI…PVFL, VQLF…MALL, NMNY…STRT, and SVLL…IISL. Asparagine 536 carries an N-linked (GlcNAc...) asparagine glycan. 3 helical membrane-spanning segments follow: residues 550–570, 571–591, and 592–612; these read IFVP…LLES, GVIT…NVGL, and SISI…MLAG.

The protein belongs to the TrkH potassium transport family.

Its subcellular location is the membrane. Its function is as follows. May function as a potassium transporter. This Dictyostelium discoideum (Social amoeba) protein is Putative potassium transport protein DDB_G0292412.